Consider the following 103-residue polypeptide: KRLLEDLGIKINEIIPEGASVKNLINLPKAWFNIVPYREVGLMTASFLQKDFGMPYILTTPMGIIDTADFIRQVQKNVNKLAPFFLNKTFDYESYIDYQTKFV.

This sequence belongs to the ChlB/BchB/BchZ family. As to quaternary structure, protochlorophyllide reductase is composed of three subunits; ChlL, ChlN and ChlB. Forms a heterotetramer of two ChlB and two ChlN subunits. The cofactor is [4Fe-4S] cluster.

The protein resides in the plastid. The protein localises to the chloroplast. It catalyses the reaction chlorophyllide a + oxidized 2[4Fe-4S]-[ferredoxin] + 2 ADP + 2 phosphate = protochlorophyllide a + reduced 2[4Fe-4S]-[ferredoxin] + 2 ATP + 2 H2O. It functions in the pathway porphyrin-containing compound metabolism; chlorophyll biosynthesis (light-independent). Functionally, component of the dark-operative protochlorophyllide reductase (DPOR) that uses Mg-ATP and reduced ferredoxin to reduce ring D of protochlorophyllide (Pchlide) to form chlorophyllide a (Chlide). This reaction is light-independent. The NB-protein (ChlN-ChlB) is the catalytic component of the complex. In Equisetum arvense (Field horsetail), this protein is Light-independent protochlorophyllide reductase subunit B (chlB).